The chain runs to 133 residues: MNKFKLIVTTPERVLISGEVSRVLCKNAVGEFEILAGHQPYLTATVPTVTRIDDENGESKYLFTSTGLMKVQNNEVTFCVNSAEWPEEIDEARAMNAKQRAEERLKNKTDELDEKRAKLALARAMSRLKLKEM.

This sequence belongs to the ATPase epsilon chain family. In terms of assembly, F-type ATPases have 2 components, CF(1) - the catalytic core - and CF(0) - the membrane proton channel. CF(1) has five subunits: alpha(3), beta(3), gamma(1), delta(1), epsilon(1). CF(0) has three main subunits: a, b and c.

It is found in the cell membrane. In terms of biological role, produces ATP from ADP in the presence of a proton gradient across the membrane. The polypeptide is ATP synthase epsilon chain (Clostridium perfringens (strain ATCC 13124 / DSM 756 / JCM 1290 / NCIMB 6125 / NCTC 8237 / Type A)).